The sequence spans 363 residues: Cobalt-precorrin-5B C(1)-methyltransferase (363 aa).

It belongs to the CbiD family.

The catalysed reaction is Co-precorrin-5B + S-adenosyl-L-methionine = Co-precorrin-6A + S-adenosyl-L-homocysteine. It participates in cofactor biosynthesis; adenosylcobalamin biosynthesis; cob(II)yrinate a,c-diamide from sirohydrochlorin (anaerobic route): step 6/10. In terms of biological role, catalyzes the methylation of C-1 in cobalt-precorrin-5B to form cobalt-precorrin-6A. The sequence is that of Cobalt-precorrin-5B C(1)-methyltransferase from Burkholderia mallei (strain ATCC 23344).